Consider the following 212-residue polypeptide: Uridine kinase (212 aa).

13–20 (GGSGSGKT) serves as a coordination point for ATP.

The protein belongs to the uridine kinase family.

The protein resides in the cytoplasm. The catalysed reaction is uridine + ATP = UMP + ADP + H(+). It carries out the reaction cytidine + ATP = CMP + ADP + H(+). It participates in pyrimidine metabolism; CTP biosynthesis via salvage pathway; CTP from cytidine: step 1/3. The protein operates within pyrimidine metabolism; UMP biosynthesis via salvage pathway; UMP from uridine: step 1/1. This is Uridine kinase from Bacillus cereus (strain ATCC 10987 / NRS 248).